The sequence spans 328 residues: Probable tRNA pseudouridine synthase B (328 aa).

Residue D71 is the Nucleophile of the active site. The 76-residue stretch at 238 to 313 folds into the PUA domain; sequence LPKIWVRDSA…LVARVDRVIM (76 aa).

Belongs to the pseudouridine synthase TruB family. Type 2 subfamily.

The catalysed reaction is uridine(55) in tRNA = pseudouridine(55) in tRNA. In terms of biological role, could be responsible for synthesis of pseudouridine from uracil-55 in the psi GC loop of transfer RNAs. In Pyrobaculum islandicum (strain DSM 4184 / JCM 9189 / GEO3), this protein is Probable tRNA pseudouridine synthase B.